The sequence spans 233 residues: tRNA (guanine-N(7)-)-methyltransferase (233 aa).

Residues glutamate 64, glutamate 89, aspartate 116, and aspartate 138 each coordinate S-adenosyl-L-methionine. Aspartate 138 is an active-site residue. Substrate is bound by residues lysine 142, aspartate 174, and threonine 212–glutamate 215.

This sequence belongs to the class I-like SAM-binding methyltransferase superfamily. TrmB family.

It catalyses the reaction guanosine(46) in tRNA + S-adenosyl-L-methionine = N(7)-methylguanosine(46) in tRNA + S-adenosyl-L-homocysteine. It functions in the pathway tRNA modification; N(7)-methylguanine-tRNA biosynthesis. Its function is as follows. Catalyzes the formation of N(7)-methylguanine at position 46 (m7G46) in tRNA. The polypeptide is tRNA (guanine-N(7)-)-methyltransferase (Rhizobium johnstonii (strain DSM 114642 / LMG 32736 / 3841) (Rhizobium leguminosarum bv. viciae)).